The chain runs to 935 residues: LPS-assembly protein LptD (935 aa).

The N-terminal stretch at 1–33 is a signal peptide; sequence MALKSPAFRRKFPLLVTGGLLALQPLATSYVVA. The tract at residues 52–85 is disordered; the sequence is KTPVNNLPPRPVHEGAAVSSGTEAAGEAETADRP. Residues 65 to 79 show a composition bias toward low complexity; sequence EGAAVSSGTEAAGEA.

It belongs to the LptD family. In terms of assembly, component of the lipopolysaccharide transport and assembly complex. Interacts with LptE and LptA.

The protein resides in the cell outer membrane. Functionally, together with LptE, is involved in the assembly of lipopolysaccharide (LPS) at the surface of the outer membrane. In Pseudomonas putida (strain ATCC 700007 / DSM 6899 / JCM 31910 / BCRC 17059 / LMG 24140 / F1), this protein is LPS-assembly protein LptD.